We begin with the raw amino-acid sequence, 870 residues long: Radial spoke head 10 homolog B (870 aa).

Residues 1-16 show a composition bias toward basic and acidic residues; sequence MVKEKKKADKKGEKSA. The interval 1 to 43 is disordered; sequence MVKEKKKADKKGEKSARSPSSLSDNLDFSKQDGNTTRQEMSPA. Over residues 17–39 the composition is skewed to polar residues; the sequence is RSPSSLSDNLDFSKQDGNTTRQE. MORN repeat units lie at residues 86–108, 109–131, 132–154, 155–177, 179–201, 204–226, 227–249, 251–273, 284–306, and 307–329; these read YEGE…GGCT, YRGM…DGLK, YEGD…DGSM, YEGE…TQPV, YIGH…QEGT, YEGD…SGNI, YEGQ…TTNE, YTGR…LKRI, YIGE…SGAM, and YDGE…NGRV. The disordered stretch occupies residues 674–704; sequence NKSPSAVMSHESDAAHSDSARSSSSKLELSP. Residues 683-692 show a composition bias toward basic and acidic residues; that stretch reads HESDAAHSDS. The segment covering 693–703 has biased composition (low complexity); sequence ARSSSSKLELS. A coiled-coil region spans residues 784–811; it reads KEKIRADRLRSTAQAQQRKMEDDELEAR. The interval 840–870 is disordered; sequence VSSSHLILDPPKEDVTVSPSSKTITSKKKKK.

As to quaternary structure, interacts with RSPH6A. Does not appear to be part of the axonemal radial spoke complexes 1 or 2.

The protein resides in the cytoplasm. It localises to the cytoskeleton. The protein localises to the cilium axoneme. It is found in the cell projection. Its subcellular location is the cilium. The protein resides in the flagellum. Functionally, may function as part of the axonemal radial spoke complex 3 (RS3). Radial spoke complexes are important for ciliary motility. In Homo sapiens (Human), this protein is Radial spoke head 10 homolog B (RSPH10B).